The sequence spans 833 residues: Glycerol-3-phosphate acyltransferase (833 aa).

The HXXXXD motif signature appears at 309 to 314 (CHRSHI).

Belongs to the GPAT/DAPAT family.

The protein resides in the cell inner membrane. The enzyme catalyses sn-glycerol 3-phosphate + an acyl-CoA = a 1-acyl-sn-glycero-3-phosphate + CoA. It functions in the pathway phospholipid metabolism; CDP-diacylglycerol biosynthesis; CDP-diacylglycerol from sn-glycerol 3-phosphate: step 1/3. The polypeptide is Glycerol-3-phosphate acyltransferase (Pseudomonas syringae pv. syringae (strain B728a)).